We begin with the raw amino-acid sequence, 509 residues long: Maturase K (509 aa).

Belongs to the intron maturase 2 family. MatK subfamily.

The protein localises to the plastid. The protein resides in the chloroplast. In terms of biological role, usually encoded in the trnK tRNA gene intron. Probably assists in splicing its own and other chloroplast group II introns. The polypeptide is Maturase K (Drimys granadensis).